The primary structure comprises 324 residues: Glyoxylate/hydroxypyruvate reductase B (324 aa).

Catalysis depends on residues R237 and E266. H285 (proton donor) is an active-site residue.

This sequence belongs to the D-isomer specific 2-hydroxyacid dehydrogenase family. GhrB subfamily. As to quaternary structure, homodimer.

The protein localises to the cytoplasm. The enzyme catalyses glycolate + NADP(+) = glyoxylate + NADPH + H(+). It carries out the reaction (R)-glycerate + NAD(+) = 3-hydroxypyruvate + NADH + H(+). The catalysed reaction is (R)-glycerate + NADP(+) = 3-hydroxypyruvate + NADPH + H(+). In terms of biological role, catalyzes the NADPH-dependent reduction of glyoxylate and hydroxypyruvate into glycolate and glycerate, respectively. This Salmonella schwarzengrund (strain CVM19633) protein is Glyoxylate/hydroxypyruvate reductase B.